The sequence spans 257 residues: Beta-fibrinogenase mucrofibrase-3 (257 aa).

The N-terminal stretch at 1 to 18 is a signal peptide; the sequence is MVLIRVLANLLILQLSYA. Positions 19–24 are excised as a propeptide; the sequence is QKSSEL. A Peptidase S1 domain is found at 25 to 248; the sequence is VIGGDECNIN…HLDWIKGIIA (224 aa). 6 disulfide bridges follow: Cys31–Cys162, Cys49–Cys65, Cys97–Cys255, Cys141–Cys209, Cys173–Cys188, and Cys199–Cys224. Catalysis depends on charge relay system residues His64 and Asp109. Catalysis depends on Ser203, which acts as the Charge relay system.

This sequence belongs to the peptidase S1 family. Snake venom subfamily. Monomer. As to expression, expressed by the venom gland.

Its subcellular location is the secreted. Functionally, snake venom serine protease with fibrinogenolytic activities. Cleaves beta-chain of fibrinogen (FGB) efficiently and shows relatively lower activity on alpha-chain. This is Beta-fibrinogenase mucrofibrase-3 from Protobothrops mucrosquamatus (Taiwan habu).